The sequence spans 158 residues: Non-secretory ribonuclease (158 aa).

Positions 1 to 27 (MVPKLFTSQICLLLLLGLSSLEVSLHA) are cleaved as a signal peptide. Trp34 carries a C-linked (Man) tryptophan glycan. The active-site Proton acceptor is the His42. 3'-nitrotyrosine is present on Tyr60. Residue 65 to 69 (KNRNT) coordinates substrate. N-linked (GlcNAc...) asparagine glycans are attached at residues Asn86, Asn92, and Asn111. His153 acts as the Proton donor in catalysis.

The protein belongs to the pancreatic ribonuclease family. As to quaternary structure, interacts with and forms a tight 1:1 complex with RNH1. Dimerization of two such complexes may occur.

The protein localises to the lysosome. The protein resides in the cytoplasmic granule. It carries out the reaction an [RNA] containing cytidine + H2O = an [RNA]-3'-cytidine-3'-phosphate + a 5'-hydroxy-ribonucleotide-3'-[RNA].. The catalysed reaction is an [RNA] containing uridine + H2O = an [RNA]-3'-uridine-3'-phosphate + a 5'-hydroxy-ribonucleotide-3'-[RNA].. Its function is as follows. This is a non-secretory ribonuclease. It is a pyrimidine specific nuclease with a slight preference for U. Cytotoxin and helminthotoxin. Possesses a wide variety of biological activities. The chain is Non-secretory ribonuclease (RNASE2) from Saguinus labiatus (Red-chested mustached tamarin).